The sequence spans 393 residues: Chalcone synthase 2 (393 aa).

C166 is an active-site residue.

It belongs to the thiolase-like superfamily. Chalcone/stilbene synthases family.

The enzyme catalyses (E)-4-coumaroyl-CoA + 3 malonyl-CoA + 3 H(+) = 2',4,4',6'-tetrahydroxychalcone + 3 CO2 + 4 CoA. It participates in secondary metabolite biosynthesis; flavonoid biosynthesis. Its function is as follows. The primary product of this enzyme is 4,2',4',6'-tetrahydroxychalcone (also termed naringenin-chalcone or chalcone) which can under specific conditions spontaneously isomerize into naringenin. This is Chalcone synthase 2 (CHS2) from Ruta graveolens (Common rue).